The sequence spans 149 residues: Large ribosomal subunit protein uL15 (149 aa).

A compositionally biased stretch (basic and acidic residues) spans 1–28; that stretch reads MVIKIHDLRPAPGSKRDKIRVGRGEGSK. Positions 1–54 are disordered; sequence MVIKIHDLRPAPGSKRDKIRVGRGEGSKGKTAGRGTKGTKARKNVSPRFEGGQM.

It belongs to the universal ribosomal protein uL15 family. In terms of assembly, part of the 50S ribosomal subunit.

Its function is as follows. Binds to the 23S rRNA. The protein is Large ribosomal subunit protein uL15 of Saccharopolyspora erythraea (strain ATCC 11635 / DSM 40517 / JCM 4748 / NBRC 13426 / NCIMB 8594 / NRRL 2338).